A 358-amino-acid polypeptide reads, in one-letter code: 3'(2'),5'-bisphosphate nucleotidase 2 (358 aa).

The active-site Proton acceptor is aspartate 54. Residues glutamate 77, aspartate 141, isoleucine 143, and aspartate 144 each contribute to the Mg(2+) site. Catalysis depends on threonine 146, which acts as the Proton acceptor. Positions 146, 243, 272, 275, 289, and 302 each coordinate adenosine 3',5'-bisphosphate. The AMP site is built by histidine 243, serine 272, lysine 275, arginine 289, and aspartate 302. Aspartate 302 contributes to the Mg(2+) binding site.

Belongs to the inositol monophosphatase superfamily. Mg(2+) is required as a cofactor.

The enzyme catalyses 3'-phosphoadenylyl sulfate + H2O = adenosine 5'-phosphosulfate + phosphate. It carries out the reaction adenosine 3',5'-bisphosphate + H2O = AMP + phosphate. The catalysed reaction is adenosine 2',5'-bisphosphate + H2O = AMP + phosphate. In terms of biological role, phosphatase that converts adenosine 3'-phosphate 5'-phosphosulfate (PAPS) to adenosine 5'-phosphosulfate (APS) and 3'(2')-phosphoadenosine 5'-phosphate (PAP) to AMP. Regulates the flux of sulfur in the sulfur-activation pathway by converting PAPS to APS. Involved in salt tolerance. The polypeptide is 3'(2'),5'-bisphosphate nucleotidase 2 (HAL22) (Candida albicans (strain SC5314 / ATCC MYA-2876) (Yeast)).